A 449-amino-acid polypeptide reads, in one-letter code: Trigger factor (449 aa).

Residues 173–258 (GDRVTVDFVG…LKKVEWPHLP (86 aa)) enclose the PPIase FKBP-type domain.

Belongs to the FKBP-type PPIase family. Tig subfamily.

It is found in the cytoplasm. It catalyses the reaction [protein]-peptidylproline (omega=180) = [protein]-peptidylproline (omega=0). Its function is as follows. Involved in protein export. Acts as a chaperone by maintaining the newly synthesized protein in an open conformation. Functions as a peptidyl-prolyl cis-trans isomerase. The sequence is that of Trigger factor from Burkholderia pseudomallei (strain 1710b).